Reading from the N-terminus, the 266-residue chain is Energy-coupling factor transporter ATP-binding protein EcfA2 (266 aa).

Positions 3–238 (IEVVNVSHIF…YDPRFFTSKM (236 aa)) constitute an ABC transporter domain. 43–48 (GSGKST) provides a ligand contact to ATP. The active-site Proton acceptor is the Glu-164. Residues 220-266 (GTRMEFLEKYDPRFFTSKMLVMRRLVLKGEDPFSMSDDELLERVCNS) are required for heterodimer formation.

It belongs to the ABC transporter superfamily. Energy-coupling factor EcfA family. In terms of assembly, forms a heterodimer with EcfA1. Forms a stable energy-coupling factor (ECF) transporter complex composed of 2 membrane-embedded substrate-binding proteins (S component, RibU, BioY), 2 ATP-binding proteins (A component) and 2 transmembrane proteins (T component) upon coexpression in E.coli. Stable subcomplexes with both A plus T components can also be isolated. This complex interacts with at least 2 substrate-specific components, BioY and RibU.

It is found in the cell inner membrane. ATP-binding (A) component of a common energy-coupling factor (ECF) ABC-transporter complex. Unlike classic ABC transporters this ECF transporter provides the energy necessary to transport a number of different substrates. Expression of the complex plus RibU in E.coli allows riboflavin uptake; uptake does not occur in the absence of RibU or the EcfA1A2T complex. The protein is Energy-coupling factor transporter ATP-binding protein EcfA2 (ecfA2) of Thermotoga maritima (strain ATCC 43589 / DSM 3109 / JCM 10099 / NBRC 100826 / MSB8).